Consider the following 200-residue polypeptide: MAFSPLVDELVESLRCLPGVGQKTAQRMAFHLLERGRSGGTRLAAALNHAMDGVRRCDSCQNFSDTEICQICEKPERRNGTLCVVESPSDLLAIEQAGDYKGSYFVLMGHLSPIDGVGPEEIGIERLLDRVRREGVTELILATNPTVEGEATAHYIADRLDGQNILITRLAHGIPVGGELGYVDGFTLTHAFRGRKPLSE.

A C4-type zinc finger spans residues 57–72 (CDSCQNFSDTEICQIC). The region spanning 80 to 175 (GTLCVVESPS…LITRLAHGIP (96 aa)) is the Toprim domain.

Belongs to the RecR family.

In terms of biological role, may play a role in DNA repair. It seems to be involved in an RecBC-independent recombinational process of DNA repair. It may act with RecF and RecO. The protein is Recombination protein RecR of Marinobacter nauticus (strain ATCC 700491 / DSM 11845 / VT8) (Marinobacter aquaeolei).